The primary structure comprises 290 residues: Bifunctional protein FolD (290 aa).

Residues 164–166, Ser193, and Ile234 contribute to the NADP(+) site; that span reads GRS.

This sequence belongs to the tetrahydrofolate dehydrogenase/cyclohydrolase family. In terms of assembly, homodimer.

The enzyme catalyses (6R)-5,10-methylene-5,6,7,8-tetrahydrofolate + NADP(+) = (6R)-5,10-methenyltetrahydrofolate + NADPH. It carries out the reaction (6R)-5,10-methenyltetrahydrofolate + H2O = (6R)-10-formyltetrahydrofolate + H(+). Its pathway is one-carbon metabolism; tetrahydrofolate interconversion. Catalyzes the oxidation of 5,10-methylenetetrahydrofolate to 5,10-methenyltetrahydrofolate and then the hydrolysis of 5,10-methenyltetrahydrofolate to 10-formyltetrahydrofolate. The polypeptide is Bifunctional protein FolD (Cytophaga hutchinsonii (strain ATCC 33406 / DSM 1761 / CIP 103989 / NBRC 15051 / NCIMB 9469 / D465)).